The chain runs to 1370 residues: Zinc finger MYM-type protein 3 (1370 aa).

Composition is skewed to low complexity over residues 1-12 (MDPSDFPSPFDP) and 52-61 (PSSGALDLLD). Disordered stretches follow at residues 1 to 72 (MDPS…DPGV) and 90 to 301 (PSPP…QRAG). A compositionally biased stretch (basic and acidic residues) spans 230–253 (ASEKPPERKRSERVRRAEPPKPEV). Phosphoserine occurs at positions 263 and 267. Positions 263-279 (SDEDSDAMVDDPNDEDF) are enriched in acidic residues. Glycyl lysine isopeptide (Lys-Gly) (interchain with G-Cter in SUMO2) cross-links involve residues Lys-308, Lys-320, and Lys-328. 9 MYM-type zinc fingers span residues 332-366 (QLFC…TKDS), 378-422 (HEFC…LHEV), 429-464 (HRLC…KTGS), 477-511 (KRFC…FEML), 521-559 (SLFC…PCYY), 567-604 (YQFC…KPEV), 612-646 (FQFC…HEKL), 653-692 (KSFC…GVTE), and 699-733 (WDFC…LETI). The residue at position 464 (Ser-464) is a Phosphoserine. A compositionally biased stretch (polar residues) spans 759 to 794 (NLDTQSGPESLLNSQSPESKPQTPSQTKVENSNTVR). Residues 759–830 (NLDTQSGPES…PPPPATPRKN (72 aa)) form a disordered region. Glycyl lysine isopeptide (Lys-Gly) (interchain with G-Cter in SUMO2) cross-links involve residues Lys-778 and Lys-786. Position 795 is a phosphothreonine (Thr-795). A Glycyl lysine isopeptide (Lys-Gly) (interchain with G-Cter in SUMO2) cross-link involves residue Lys-804. The segment covering 815-826 (APTPPPPPPPAT) has biased composition (pro residues). A phosphothreonine mark is found at Thr-817 and Thr-826. Glycyl lysine isopeptide (Lys-Gly) (interchain with G-Cter in SUMO2) cross-links involve residues Lys-847, Lys-861, Lys-920, and Lys-1275.

As to quaternary structure, may be a component of a BHC histone deacetylase complex that contains HDAC1, HDAC2, HMG20B/BRAF35, KDM1A, RCOR1/CoREST, PHF21A/BHC80, ZMYM2, ZNF217, ZMYM3, GSE1 and GTF2I. Most abundant in brain, moderate in muscle and heart, low in other tissues except placenta.

The protein localises to the nucleus. In terms of biological role, plays a role in the regulation of cell morphology and cytoskeletal organization. The protein is Zinc finger MYM-type protein 3 (ZMYM3) of Homo sapiens (Human).